Reading from the N-terminus, the 44-residue chain is Cytochrome b559 subunit beta (44 aa).

A helical membrane pass occupies residues 19 to 35 (WLAIHGIAIPTVFFLGA). Histidine 23 provides a ligand contact to heme.

It belongs to the PsbE/PsbF family. Heterodimer of an alpha subunit and a beta subunit. PSII is composed of 1 copy each of membrane proteins PsbA, PsbB, PsbC, PsbD, PsbE, PsbF, PsbH, PsbI, PsbJ, PsbK, PsbL, PsbM, PsbT, PsbX, PsbY, PsbZ, Psb30/Ycf12, at least 3 peripheral proteins of the oxygen-evolving complex and a large number of cofactors. It forms dimeric complexes. It depends on heme b as a cofactor.

The protein localises to the plastid. Its subcellular location is the chloroplast thylakoid membrane. This b-type cytochrome is tightly associated with the reaction center of photosystem II (PSII). PSII is a light-driven water:plastoquinone oxidoreductase that uses light energy to abstract electrons from H(2)O, generating O(2) and a proton gradient subsequently used for ATP formation. It consists of a core antenna complex that captures photons, and an electron transfer chain that converts photonic excitation into a charge separation. In Gracilaria tenuistipitata var. liui (Red alga), this protein is Cytochrome b559 subunit beta.